The primary structure comprises 306 residues: Formamidopyrimidine-DNA glycosylase (306 aa).

The active-site Schiff-base intermediate with DNA is proline 2. Catalysis depends on glutamate 3, which acts as the Proton donor. Lysine 58 (proton donor; for beta-elimination activity) is an active-site residue. The DNA site is built by histidine 114, arginine 136, and lysine 179. The segment at 270–306 adopts an FPG-type zinc-finger fold; it reads SVYDREGEACRTSGCRGTVERIVQAGRSTFYCPHCQK. The Proton donor; for delta-elimination activity role is filled by arginine 296.

It belongs to the FPG family. As to quaternary structure, monomer. The cofactor is Zn(2+).

The enzyme catalyses Hydrolysis of DNA containing ring-opened 7-methylguanine residues, releasing 2,6-diamino-4-hydroxy-5-(N-methyl)formamidopyrimidine.. It carries out the reaction 2'-deoxyribonucleotide-(2'-deoxyribose 5'-phosphate)-2'-deoxyribonucleotide-DNA = a 3'-end 2'-deoxyribonucleotide-(2,3-dehydro-2,3-deoxyribose 5'-phosphate)-DNA + a 5'-end 5'-phospho-2'-deoxyribonucleoside-DNA + H(+). In terms of biological role, involved in base excision repair of DNA damaged by oxidation or by mutagenic agents. Acts as a DNA glycosylase that recognizes and removes damaged bases. Has a preference for oxidized purines, such as 7,8-dihydro-8-oxoguanine (8-oxoG). Has AP (apurinic/apyrimidinic) lyase activity and introduces nicks in the DNA strand. Cleaves the DNA backbone by beta-delta elimination to generate a single-strand break at the site of the removed base with both 3'- and 5'-phosphates. The chain is Formamidopyrimidine-DNA glycosylase from Sinorhizobium medicae (strain WSM419) (Ensifer medicae).